The primary structure comprises 591 residues: Ketol-acid reductoisomerase, chloroplastic (591 aa).

Positions 1-20 (MAAATSSIAPSLSCPSPSSS) are disordered. The transit peptide at 1-52 (MAAATSSIAPSLSCPSPSSSSKTLWSSKARTLALPNIGFLSSSSKSLRSLTA) directs the protein to the chloroplast. Thr-53 is subject to N-acetylthreonine. In terms of domain architecture, KARI N-terminal Rossmann spans 102-300 (VRGGRDLFKH…ALGSPFTFAT (199 aa)). NADP(+)-binding positions include 123–130 (GVIGWGSQ), 156–161 (RKGSRS), and 195–199 (SDAAQ). The active site involves His-220. KARI C-terminal knotted domains follow at residues 301-449 (TLEQ…RPAG) and 450-586 (DLGP…RPEL). Mg(2+) contacts are provided by Asp-309, Glu-313, Glu-486, and Glu-490. A substrate-binding site is contributed by Ser-512.

Belongs to the ketol-acid reductoisomerase family. In terms of assembly, homodimer. Requires Mg(2+) as cofactor.

The protein resides in the plastid. It localises to the chloroplast. It carries out the reaction (2R)-2,3-dihydroxy-3-methylbutanoate + NADP(+) = (2S)-2-acetolactate + NADPH + H(+). It catalyses the reaction (2R,3R)-2,3-dihydroxy-3-methylpentanoate + NADP(+) = (S)-2-ethyl-2-hydroxy-3-oxobutanoate + NADPH + H(+). It functions in the pathway amino-acid biosynthesis; L-isoleucine biosynthesis; L-isoleucine from 2-oxobutanoate: step 2/4. Its pathway is amino-acid biosynthesis; L-valine biosynthesis; L-valine from pyruvate: step 2/4. In Arabidopsis thaliana (Mouse-ear cress), this protein is Ketol-acid reductoisomerase, chloroplastic.